Reading from the N-terminus, the 417-residue chain is Interferon-gamma-inducible GTPase 10 (417 aa).

Residue Gly-2 is the site of N-myristoyl glycine attachment. Positions 67–249 (APLNIAVTGE…PSLESTLLEE (183 aa)) constitute an IRG-type G domain. The GDP site is built by Gly-78, Ala-79, Ser-82, Thr-83, Ser-101, Lys-183, Asp-185, and Ser-231. 2 consecutive transmembrane segments (helical) span residues 284–302 (EALK…FFND) and 370–387 (AVTG…KSYY).

Belongs to the TRAFAC class dynamin-like GTPase superfamily. GB1/RHD3 GTPase family. GB1 subfamily. Homooligomer; homooligomerization occurs upon GTP-binding and is required for the association with membranous structures. Homodimer; GDP-binding induces formation of an inactive head-to-head homodimer. Post-translationally, myristoylation is required for localization to pathogen-containing vacuoles. In terms of processing, (Microbial infection) Phosphorylated by Toxoplasma gondii ROP18.

The protein localises to the membrane. It localises to the cytoplasmic vesicle membrane. The enzyme catalyses GTP + H2O = GDP + phosphate + H(+). Its function is as follows. Interferon (IFN)-inducible GTPase that plays important roles in innate immunity against a diverse range of bacterial, viral and protozoan pathogens by mediating cytosolic release of pathogenic ligands that activate the inflammasomes. Following infection, recruited to the membrane of pathogens in a GBP-dependent manner and mediates disruption of the pathogen membrane, liberating ligands that are detected by inflammasomes, such as lipopolysaccharide (LPS) that activates the non-canonical CASP4/CASP11 inflammasome or double-stranded DNA (dsDNA) that activates the AIM2 inflammasome. Promotes AIM2 and NLRP3 inflammasome activation following A.fumigatus infection by liberating beta-glucan, which directly triggers inflammasome assembly. Promotes NLRP3 inflammasome activation following influenza A virus infection. The protein is Interferon-gamma-inducible GTPase 10 of Mus musculus (Mouse).